The following is a 446-amino-acid chain: Phosphoglucosamine mutase (446 aa).

Ser-101 acts as the Phosphoserine intermediate in catalysis. Positions 101, 240, 242, and 244 each coordinate Mg(2+). Ser-101 is modified (phosphoserine).

The protein belongs to the phosphohexose mutase family. Requires Mg(2+) as cofactor. Activated by phosphorylation.

It catalyses the reaction alpha-D-glucosamine 1-phosphate = D-glucosamine 6-phosphate. Its function is as follows. Catalyzes the conversion of glucosamine-6-phosphate to glucosamine-1-phosphate. The chain is Phosphoglucosamine mutase from Coxiella burnetii (strain CbuK_Q154) (Coxiella burnetii (strain Q154)).